Reading from the N-terminus, the 65-residue chain is 7 kDa A-type inclusion protein (65 aa).

The segment covering Met1–Ala20 has biased composition (polar residues). Residues Met1–Gln31 are disordered.

This is 7 kDa A-type inclusion protein from Vaccinia virus (strain Copenhagen) (VACV).